A 901-amino-acid chain; its full sequence is Probable inorganic carbon transporter subunit DabA (901 aa).

Zn(2+)-binding residues include C424, D426, H606, and C621.

It belongs to the inorganic carbon transporter (TC 9.A.2) DabA family. Forms a complex with DabB. Requires Zn(2+) as cofactor.

Its subcellular location is the cell membrane. Functionally, part of an energy-coupled inorganic carbon pump. This chain is Probable inorganic carbon transporter subunit DabA, found in Staphylococcus aureus (strain USA300).